The primary structure comprises 55 residues: Large ribosomal subunit protein bL33 (55 aa).

Belongs to the bacterial ribosomal protein bL33 family.

This Polaromonas sp. (strain JS666 / ATCC BAA-500) protein is Large ribosomal subunit protein bL33.